The sequence spans 215 residues: Large ribosomal subunit protein mL43 (215 aa).

This sequence belongs to the mitochondrion-specific ribosomal protein mL43 family. In terms of assembly, component of the mitochondrial large ribosomal subunit (mt-LSU). Mature mammalian 55S mitochondrial ribosomes consist of a small (28S) and a large (39S) subunit. The 28S small subunit contains a 12S ribosomal RNA (12S mt-rRNA) and 30 different proteins. The 39S large subunit contains a 16S rRNA (16S mt-rRNA), a copy of mitochondrial valine transfer RNA (mt-tRNA(Val)), which plays an integral structural role, and 52 different proteins. As to expression, high relative levels in skeletal muscle and testis. Lower levels of expression in the heart, brain, placenta, lung, liver, kidney, pancreas, spleen, thymus, prostate, ovary, small intestine, colon and leukocytes. Expression is coregulated with TWNK.

The protein localises to the mitochondrion. The polypeptide is Large ribosomal subunit protein mL43 (MRPL43) (Homo sapiens (Human)).